The sequence spans 1305 residues: DNA-directed DNA polymerase (1305 aa).

Belongs to the DNA polymerase type-C family.

The enzyme catalyses DNA(n) + a 2'-deoxyribonucleoside 5'-triphosphate = DNA(n+1) + diphosphate. In terms of biological role, replicates viral genomic DNA. The sequence is that of DNA-directed DNA polymerase from Bacillus pumilus (Bacillus mesentericus).